We begin with the raw amino-acid sequence, 129 residues long: Phosphoribosyl-AMP cyclohydrolase (129 aa).

Asp76 lines the Mg(2+) pocket. Cys77 provides a ligand contact to Zn(2+). The Mg(2+) site is built by Asp78 and Asp80. 2 residues coordinate Zn(2+): Cys97 and Cys104.

It belongs to the PRA-CH family. In terms of assembly, homodimer. The cofactor is Mg(2+). Zn(2+) serves as cofactor.

It localises to the cytoplasm. It catalyses the reaction 1-(5-phospho-beta-D-ribosyl)-5'-AMP + H2O = 1-(5-phospho-beta-D-ribosyl)-5-[(5-phospho-beta-D-ribosylamino)methylideneamino]imidazole-4-carboxamide. It functions in the pathway amino-acid biosynthesis; L-histidine biosynthesis; L-histidine from 5-phospho-alpha-D-ribose 1-diphosphate: step 3/9. Catalyzes the hydrolysis of the adenine ring of phosphoribosyl-AMP. The chain is Phosphoribosyl-AMP cyclohydrolase from Polaromonas sp. (strain JS666 / ATCC BAA-500).